The chain runs to 35 residues: Hemocyanin A chain (35 aa).

Belongs to the tyrosinase family. Hemocyanin subfamily. In terms of tissue distribution, hemolymph.

The protein resides in the secreted. Its subcellular location is the extracellular space. In terms of biological role, hemocyanins are copper-containing oxygen carriers occurring freely dissolved in the hemolymph of many mollusks and arthropods. This is Hemocyanin A chain from Cherax destructor (Common yabby crayfish).